A 270-amino-acid chain; its full sequence is Formamidopyrimidine-DNA glycosylase (270 aa).

The Schiff-base intermediate with DNA role is filled by P2. E3 serves as the catalytic Proton donor. Catalysis depends on K58, which acts as the Proton donor; for beta-elimination activity. DNA contacts are provided by H91, R110, and R151. The FPG-type zinc-finger motif lies at 236–270 (FVYGRGGQPCKVCGTELREVKLGQRASVFCPKCQR). The active-site Proton donor; for delta-elimination activity is the R260.

The protein belongs to the FPG family. Monomer. Zn(2+) is required as a cofactor.

The catalysed reaction is Hydrolysis of DNA containing ring-opened 7-methylguanine residues, releasing 2,6-diamino-4-hydroxy-5-(N-methyl)formamidopyrimidine.. It carries out the reaction 2'-deoxyribonucleotide-(2'-deoxyribose 5'-phosphate)-2'-deoxyribonucleotide-DNA = a 3'-end 2'-deoxyribonucleotide-(2,3-dehydro-2,3-deoxyribose 5'-phosphate)-DNA + a 5'-end 5'-phospho-2'-deoxyribonucleoside-DNA + H(+). Functionally, involved in base excision repair of DNA damaged by oxidation or by mutagenic agents. Acts as a DNA glycosylase that recognizes and removes damaged bases. Has a preference for oxidized purines, such as 7,8-dihydro-8-oxoguanine (8-oxoG). Has AP (apurinic/apyrimidinic) lyase activity and introduces nicks in the DNA strand. Cleaves the DNA backbone by beta-delta elimination to generate a single-strand break at the site of the removed base with both 3'- and 5'-phosphates. The protein is Formamidopyrimidine-DNA glycosylase of Pseudomonas entomophila (strain L48).